A 75-amino-acid chain; its full sequence is Protease B inhibitor 2 (75 aa).

Residue T74 is modified to Phosphothreonine.

Belongs to the protease inhibitor I9 family. In terms of assembly, part of the heterodimeric LMA1 complex together with the thioredoxin II/TRX2. LMA1 binds to the ATPase SEC18.

It is found in the cytoplasm. Cytosolic inhibitor of vacuolar proteinase B (yscB), probably regulating protease B activity during limited proteolysis. PBI2 is a component of the LMA1 complex, which is involved in the facilitation of vesicle fusion such as homotypic vacuole and ER-derived COPII vesicle fusion with the Golgi. In Saccharomyces cerevisiae (strain ATCC 204508 / S288c) (Baker's yeast), this protein is Protease B inhibitor 2 (PBI2).